Here is a 244-residue protein sequence, read N- to C-terminus: 14-3-3 protein beta/alpha (244 aa).

Met1 is modified (N-acetylmethionine).

It belongs to the 14-3-3 family. As to quaternary structure, homodimer, and heterodimer with other family members.

The protein resides in the cytoplasm. In terms of biological role, adapter protein implicated in the regulation of a large spectrum of both general and specialized signaling pathways. Binds to a large number of partners, usually by recognition of a phosphoserine or phosphothreonine motif. Binding generally results in the modulation of the activity of the binding partner. This Xenopus tropicalis (Western clawed frog) protein is 14-3-3 protein beta/alpha (ywhab).